We begin with the raw amino-acid sequence, 383 residues long: uncharacterized protein (383 aa).

It belongs to the peptidase M20 family.

This is an uncharacterized protein from Staphylococcus aureus (strain USA300).